The chain runs to 526 residues: Light-independent protochlorophyllide reductase subunit B (526 aa).

Asp-36 contributes to the [4Fe-4S] cluster binding site. The Proton donor role is filled by Asp-284. 419-420 (GL) is a substrate binding site.

This sequence belongs to the ChlB/BchB/BchZ family. In terms of assembly, protochlorophyllide reductase is composed of three subunits; BchL, BchN and BchB. Forms a heterotetramer of two BchB and two BchN subunits. The cofactor is [4Fe-4S] cluster.

The catalysed reaction is chlorophyllide a + oxidized 2[4Fe-4S]-[ferredoxin] + 2 ADP + 2 phosphate = protochlorophyllide a + reduced 2[4Fe-4S]-[ferredoxin] + 2 ATP + 2 H2O. Its pathway is porphyrin-containing compound metabolism; bacteriochlorophyll biosynthesis (light-independent). Component of the dark-operative protochlorophyllide reductase (DPOR) that uses Mg-ATP and reduced ferredoxin to reduce ring D of protochlorophyllide (Pchlide) to form chlorophyllide a (Chlide). This reaction is light-independent. The NB-protein (BchN-BchB) is the catalytic component of the complex. This is Light-independent protochlorophyllide reductase subunit B from Halorhodospira halophila (strain DSM 244 / SL1) (Ectothiorhodospira halophila (strain DSM 244 / SL1)).